A 389-amino-acid chain; its full sequence is Leucine aminopeptidase 1 (389 aa).

The N-terminal stretch at 1–18 (MKSAALLLPLYTAAFAAA) is a signal peptide. The propeptide occupies 19–89 (AFHHEHAQAV…TLNHRINAES (71 aa)). Asn99, Asn146, and Asn156 each carry an N-linked (GlcNAc...) asparagine glycan. Zn(2+) contacts are provided by His188, Asp207, Glu246, and Asp273. Cysteines 322 and 326 form a disulfide. Residue His355 coordinates Zn(2+).

This sequence belongs to the peptidase M28 family. M28E subfamily. Monomer. Requires Zn(2+) as cofactor.

It localises to the secreted. Its function is as follows. Extracellular aminopeptidase that allows assimilation of proteinaceous substrates. The chain is Leucine aminopeptidase 1 (lap1) from Pyrenophora tritici-repentis (strain Pt-1C-BFP) (Wheat tan spot fungus).